The sequence spans 206 residues: Ancillary SecYEG translocon subunit (206 aa).

At M1 to K23 the chain is on the cytoplasmic side. The helical transmembrane segment at A24–N43 threads the bilayer. Residues S44–I206 are Periplasmic-facing.

It belongs to the YfgM family. In terms of assembly, interacts with the SecYEG translocon. Forms a complex with PpiD. Also interacts with RcsB.

The protein resides in the cell inner membrane. Its activity is regulated as follows. Is stable during exponential growth and degraded in stationary phase by the essential FtsH protease. Degradation is influenced by the alarmone (p)ppGpp, but not by inorganic polyphosphate (polyP), RpoS, RcsB or PpiD. Its function is as follows. May mediate protein transfer from the SecYEG translocon to the periplasmic chaperone network via its periplasmic C-terminal region. In addition, at the cytosolic site, acts as a negative regulator of RcsB. In stationary phase, the FtsH-dependent degradation of YfgM ensures the release of RcsB from YfgM and thereby permits cellular protection by the Rcs phosphorelay system. May coordinate stress responses across the inner membrane via a dynamic protein-protein interaction network inside and outside of the membrane. The sequence is that of Ancillary SecYEG translocon subunit (yfgM) from Escherichia coli (strain K12).